The chain runs to 362 residues: Dihydroorotate dehydrogenase (quinone) (362 aa).

Residues 62–66 (AGYDK) and Thr86 each bind FMN. Lys66 provides a ligand contact to substrate. Residue 111–115 (NRLGF) participates in substrate binding. Asn139 and Asn170 together coordinate FMN. A substrate-binding site is contributed by Asn170. Catalysis depends on Ser173, which acts as the Nucleophile. Asn175 provides a ligand contact to substrate. FMN is bound by residues Lys215 and Ser243. 244–245 (NT) lines the substrate pocket. Residues Gly266, Gly295, and 316 to 317 (YS) contribute to the FMN site.

The protein belongs to the dihydroorotate dehydrogenase family. Type 2 subfamily. Monomer. The cofactor is FMN.

It is found in the cell membrane. The enzyme catalyses (S)-dihydroorotate + a quinone = orotate + a quinol. It participates in pyrimidine metabolism; UMP biosynthesis via de novo pathway; orotate from (S)-dihydroorotate (quinone route): step 1/1. In terms of biological role, catalyzes the conversion of dihydroorotate to orotate with quinone as electron acceptor. The chain is Dihydroorotate dehydrogenase (quinone) from Rhizobium leguminosarum bv. trifolii (strain WSM2304).